The primary structure comprises 196 residues: Fe/S biogenesis protein NfuA (196 aa).

2 residues coordinate [4Fe-4S] cluster: C154 and C157.

The protein belongs to the NfuA family. Homodimer. Requires [4Fe-4S] cluster as cofactor.

In terms of biological role, involved in iron-sulfur cluster biogenesis. Binds a 4Fe-4S cluster, can transfer this cluster to apoproteins, and thereby intervenes in the maturation of Fe/S proteins. Could also act as a scaffold/chaperone for damaged Fe/S proteins. The sequence is that of Fe/S biogenesis protein NfuA from Blochmanniella pennsylvanica (strain BPEN).